A 205-amino-acid polypeptide reads, in one-letter code: Arginine exporter protein ArgO (205 aa).

6 consecutive transmembrane segments (helical) span residues 1–21 (MLAV…PLGP), 42–62 (LCAL…SALL), 67–87 (LLLA…GWGA), 111–131 (IIVT…DTFV), 147–167 (WFAF…ALLA), and 182–202 (VINL…ARQG).

This sequence belongs to the LysE/ArgO transporter (TC 2.A.75) family.

It is found in the cell inner membrane. The enzyme catalyses L-arginine(in) = L-arginine(out). Its function is as follows. Involved in the export of arginine. Important to control the intracellular level of arginine and the correct balance between arginine and lysine. The chain is Arginine exporter protein ArgO from Yersinia enterocolitica serotype O:8 / biotype 1B (strain NCTC 13174 / 8081).